Consider the following 187-residue polypeptide: Signal peptidase I U (187 aa).

Residues 1–16 (MNAKTITLKKKRKIKT) are Cytoplasmic-facing. A helical transmembrane segment spans residues 17–37 (IVVLSIIMIAALIFTIRLVFY). At 38–187 (KPFLIEGSSM…YPFGEMRQAK (150 aa)) the chain is on the extracellular side. Active-site residues include Ser46 and Lys88.

It belongs to the peptidase S26 family.

The protein resides in the cell membrane. It carries out the reaction Cleavage of hydrophobic, N-terminal signal or leader sequences from secreted and periplasmic proteins.. This chain is Signal peptidase I U (sipU), found in Bacillus subtilis (strain 168).